Consider the following 89-residue polypeptide: Barrier-to-autointegration factor 1 (89 aa).

Belongs to the BAF family. As to quaternary structure, interacts with emr-1 and lem-2. Interacts with lem-4l, leading to decreased phosphorylation by VRK1 and promoting dephosphorylation by protein phosphatase 2A (PP2A). In terms of processing, phosphorylated by vrk-1. Phosphorylation by vrk-1 in mitosis is essential to achieve correct timing of recruitment of nuclear envelope components during nuclear envelope assembly. Dephosphorylated by protein phosphatase 2A (PP2A) following interaction with lem-4l during mitotic exit, leading to mitotic nuclear envelope reassembly.

Its subcellular location is the nucleus. DNA-binding protein which plays an essential role in nuclear envelope formation. Required for normal chromosome segregation during mitosis. Associates with the nuclear lamina via its interaction with LEM domain containing proteins emr-1 and lem-2. In association with lem-3, plays a role in radiation-induced DNA damage repair response. This Caenorhabditis elegans protein is Barrier-to-autointegration factor 1 (baf-1).